We begin with the raw amino-acid sequence, 403 residues long: S-adenosylmethionine synthase (403 aa).

Residue His-16 coordinates ATP. A Mg(2+)-binding site is contributed by Asp-18. Glu-44 lines the K(+) pocket. L-methionine contacts are provided by Glu-57 and Gln-100. A flexible loop region spans residues 100–110 (QSSDIAQGVDR). ATP contacts are provided by residues 165-167 (DAK), Asp-242, 248-249 (RK), Ala-265, and Lys-269. Asp-242 contacts L-methionine. An L-methionine-binding site is contributed by Lys-273.

The protein belongs to the AdoMet synthase family. In terms of assembly, homotetramer; dimer of dimers. The cofactor is Mg(2+). Requires K(+) as cofactor.

The protein resides in the cytoplasm. It catalyses the reaction L-methionine + ATP + H2O = S-adenosyl-L-methionine + phosphate + diphosphate. It participates in amino-acid biosynthesis; S-adenosyl-L-methionine biosynthesis; S-adenosyl-L-methionine from L-methionine: step 1/1. Functionally, catalyzes the formation of S-adenosylmethionine (AdoMet) from methionine and ATP. The overall synthetic reaction is composed of two sequential steps, AdoMet formation and the subsequent tripolyphosphate hydrolysis which occurs prior to release of AdoMet from the enzyme. The chain is S-adenosylmethionine synthase from Nitrosococcus oceani (strain ATCC 19707 / BCRC 17464 / JCM 30415 / NCIMB 11848 / C-107).